Consider the following 281-residue polypeptide: MATVTAALVKELRERTGAGMMECKKALVEANADIELAIENMRKSGAAKAAKKAGNVAAEGAIIIKEENGSAVLLEVNCQTDFVAKDGNFTAFAQEVAAAALASKATVEELQAQFEEARVALVAKIGENINIRRVQYVEGTAIASYRHGEKIGVVVAGEGDAETLKHVAMHVAASKPEYVNPEDVPADVVAKEKEVQVEIAMNEGKPAEIAEKMVVGRMKKFTGEISLTGQAFIMEPKKTVGEMLKEKGASVATFVRLEVGEGIEKAEGLSFAEEVALAQKG.

The involved in Mg(2+) ion dislocation from EF-Tu stretch occupies residues 80-83; the sequence is TDFV.

Belongs to the EF-Ts family.

The protein localises to the cytoplasm. Its function is as follows. Associates with the EF-Tu.GDP complex and induces the exchange of GDP to GTP. It remains bound to the aminoacyl-tRNA.EF-Tu.GTP complex up to the GTP hydrolysis stage on the ribosome. The protein is Elongation factor Ts of Vibrio parahaemolyticus serotype O3:K6 (strain RIMD 2210633).